The primary structure comprises 2176 residues: Protein eyes shut (2176 aa).

Over 1 to 122 the chain is Cytoplasmic; the sequence is MSNVHQFDTQ…NPNILLPTLR (122 aa). A helical membrane pass occupies residues 123-143; it reads ILARGLLLPALILAILVGSSQ. An EGF-like 1 domain is found at 144–180; it reads AGFACLSNPCVFGVCIDGLNSSYSCYCIDGYTGIQCQ. At 144–2176 the chain is on the extracellular side; sequence AGFACLSNPC…DLHGDEPLTV (2033 aa). Intrachain disulfides connect C148–C158, C153–C168, C170–C179, C186–C197, C191–C206, C208–C217, C224–C235, C229–C244, C246–C255, C262–C276, C270–C286, C288–C297, C304–C315, C309–C324, C326–C335, C342–C353, C347–C362, C364–C373, C380–C392, C386–C401, and C403–C412. N163 carries N-linked (GlcNAc...) asparagine glycosylation. An EGF-like 2; calcium-binding domain is found at 182-218; that stretch reads NWDECWSSPCQNGGTCVDGVAYYNCTCPEGFSGSNCE. N-linked (GlcNAc...) asparagine glycosylation occurs at N205. Residues 220–256 form the EGF-like 3; calcium-binding domain; the sequence is NVDECMSNPCQNGGLCRDRTNGYICTCQPGYLGSHCE. Residues 258-298 form the EGF-like 4 domain; that stretch reads DVAVCETGTGARCQHGGECIEGPGLEFTCDCPAGWHGRICQ. Residues 300-336 enclose the EGF-like 5; calcium-binding domain; it reads EINECASSPCQNGGVCVDKLAAYACACPMGYTGINCE. The region spanning 338–374 is the EGF-like 6 domain; that stretch reads EILICADNPCQNNALCLMEEGVPTCYCVPDYHGEKCE. The EGF-like 7; calcium-binding domain maps to 376-413; the sequence is QYDECQLGPRCMNGGVCIDGVDTFSCSCPPLLTGMLCE. The N-linked (GlcNAc...) asparagine glycan is linked to N425. Composition is skewed to low complexity over residues 429 to 447 and 482 to 502; these read PATQ…MAPP and VTSV…VSVE. 5 disordered regions span residues 429 to 465, 482 to 639, 757 to 783, 802 to 854, and 902 to 1014; these read PATQ…SRAS, VTSV…RPTA, RFTT…LPTP, LITT…VEIT, and APPA…GVPE. Positions 514–526 are enriched in polar residues; the sequence is GSHSISVEQTTAV. Acidic residues predominate over residues 548–560; the sequence is SASESETETEEEI. Composition is skewed to low complexity over residues 564–582 and 596–632; these read TTAR…ESPS and TSAS…SEEV. The span at 757–775 shows a compositional bias: polar residues; sequence RFTTVQPPAGVTTTSPTED. The span at 811–820 shows a compositional bias: basic residues; the sequence is THHHHHHHPH. Pro residues-rich tracts occupy residues 904 to 922 and 930 to 955; these read PATP…PSPP and TLPP…PTPP. In terms of domain architecture, EGF-like 8 spans 1018-1054; the sequence is GDVDCIKLGCYNGGTCVTTSEGSRCVCRFDRQGPLCE. 3 disulfide bridges follow: C1022-C1033, C1027-C1042, and C1044-C1053. The region spanning 1059-1266 is the Laminin G-like 1 domain; that stretch reads IRNAAFSGDS…GITECGSLAC (208 aa). Residues N1165, N1170, and N1176 are each glycosylated (N-linked (GlcNAc...) asparagine). The 38-residue stretch at 1309-1346 folds into the EGF-like 9 domain; the sequence is EISVCEDNPCQYGGTCVQFPGSGYLCLCPLGKHGHYCE. 3 disulfides stabilise this stretch: C1313–C1324, C1318–C1334, and C1336–C1345. One can recognise a Laminin G-like 2 domain in the interval 1353-1549; that stretch reads LPSFSGSVNG…GVGQCGTREC (197 aa). A glycan (N-linked (GlcNAc...) asparagine) is linked at N1471. 2 EGF-like domains span residues 1545 to 1581 and 1583 to 1621; these read GTRE…PLCA and PTNP…KNCE. 6 disulfide bridges follow: C1549–C1560, C1554–C1569, C1571–C1580, C1587–C1600, C1594–C1609, and C1611–C1620. Residues N1665 and N1861 are each glycosylated (N-linked (GlcNAc...) asparagine). A Laminin G-like 3 domain is found at 1692-1879; that stretch reads EKQRSFSPVP…NIRDCDGTAC (188 aa). 2 EGF-like domains span residues 1875–1912 and 1913–1946; these read DGTA…DRCE and YSET…FYCE. 6 disulfide bridges follow: C1879/C1890, C1884/C1900, C1902/C1911, C1917/C1928, C1922/C1934, and C1936/C1945. A Laminin G-like 4 domain is found at 1952-2166; that stretch reads PTTPSFRGNS…TYQGENIGSC (215 aa). N1994, N2035, and N2099 each carry an N-linked (GlcNAc...) asparagine glycan. Residues 2080–2101 are disordered; sequence GGRSLGSTTPRSTLAGRRKNSS.

Belongs to the EYS family. Expressed from the beginning of rhabdomere biogenesis (48 hours after pupal formation), when it decorates the entire photoreceptor apical surface.

It is found in the membrane. Its subcellular location is the secreted. Its function is as follows. Essential for the formation of matrix-filled interrhabdomeral space: critical for the formation of epithelial lumina in the retina. Acts together with prominin (prom) and the cell adhesion molecule chaoptin (chp) to choreograph the partitioning of rhabdomeres into an open system. The chain is Protein eyes shut from Drosophila melanogaster (Fruit fly).